A 179-amino-acid chain; its full sequence is MKGNQLSYDDPWSTAPAQPEPAPAPEPETAPSATVTTASAAVRDSMAVQHSTDGVSATFKFAGQYSDPWVVVKGADPADVLAKVNTAEFKALMDKVQQIAGHYAGSGGSAPANGGGGGQQQSRAPQAAQEAPGGEKRYCQHGEMVYKSGVSKKTGKPYALFSCTAPRDQQCDAQWPDKK.

2 disordered regions span residues 1 to 38 (MKGN…VTTA) and 102 to 137 (HYAG…GEKR). The segment covering 18-28 (QPEPAPAPEPE) has biased composition (pro residues). Over residues 29-38 (TAPSATVTTA) the composition is skewed to low complexity. Over residues 104 to 119 (AGSGGSAPANGGGGGQ) the composition is skewed to gly residues. The span at 120-132 (QQSRAPQAAQEAP) shows a compositional bias: low complexity.

The chain is Gene 49 protein (49) from Mycobacterium (Mycobacteriophage L5).